The following is a 397-amino-acid chain: Lysophospholipid transporter LplT (397 aa).

A run of 11 helical transmembrane segments spans residues 16-36 (MMAV…LLFA), 53-73 (VLQM…GQVA), 91-111 (LGAV…LVGV), 139-159 (LMES…GMLA), 164-184 (GAAL…NLLI), 229-249 (WGAG…ALGI), 257-277 (YLNA…AKLV), 282-302 (VSRC…FSLQ), 304-324 (AALP…FFVV), 344-364 (IAVQ…LYSL), and 372-392 (VVGI…GLWL).

It belongs to the major facilitator superfamily. LplT (TC 2.A.1.42) family.

Its subcellular location is the cell inner membrane. Catalyzes the facilitated diffusion of 2-acyl-glycero-3-phosphoethanolamine (2-acyl-GPE) into the cell. The sequence is that of Lysophospholipid transporter LplT from Cronobacter sakazakii (strain ATCC BAA-894) (Enterobacter sakazakii).